The primary structure comprises 245 residues: tRNA1(Val) (adenine(37)-N6)-methyltransferase (245 aa).

It belongs to the methyltransferase superfamily. tRNA (adenine-N(6)-)-methyltransferase family.

It is found in the cytoplasm. It catalyses the reaction adenosine(37) in tRNA1(Val) + S-adenosyl-L-methionine = N(6)-methyladenosine(37) in tRNA1(Val) + S-adenosyl-L-homocysteine + H(+). Specifically methylates the adenine in position 37 of tRNA(1)(Val) (anticodon cmo5UAC). This Citrobacter koseri (strain ATCC BAA-895 / CDC 4225-83 / SGSC4696) protein is tRNA1(Val) (adenine(37)-N6)-methyltransferase.